Here is an 845-residue protein sequence, read N- to C-terminus: Aryl hydrocarbon receptor (845 aa).

Residues 1–10 constitute a propeptide that is removed on maturation; that stretch reads MNSSSASITY. The span at 1-10 shows a compositional bias: polar residues; sequence MNSSSASITY. The segment at 1 to 39 is disordered; the sequence is MNSSSASITYASRKRRKPVQKTVKPVPAEGIKSNPSKRH. 2 short sequence motifs (nuclear localization signal) span residues 13–16 and 37–42; these read RKRR and KRHRDR. The 54-residue stretch at 27–80 folds into the bHLH domain; it reads PAEGIKSNPSKRHRDRLNTELDRLASLLPFPQDVVNKLDKLSVLRLSVSYLRAK. Required for maintaining the overall integrity of the AHR:ARNT heterodimer and its transcriptional activity regions lie at residues 50 to 82, 117 to 125, and 265 to 267; these read LASLLPFPQDVVNKLDKLSVLRLSVSYLRAKSF, LLQALNGFV, and FAI. A Nuclear export signal motif is present at residues 64–72; it reads LDKLSVLRL. The PAS 1 domain occupies 110 to 180; the sequence is NLQEGEFLLQ…RQLHWALNPS (71 aa). One can recognise a PAS 2 domain in the interval 274–341; sequence PSILEIRTKN…CAEYHIRMIK (68 aa). The PAC domain occupies 347 to 385; the sequence is LIVFRLLTKDNRWTWVQSNARLVYKNGRPDYIIATQRPL. Residues 820–845 are disordered; sequence NNTQPTTHLHPSEARPFSDLTSSGFL.

As to quaternary structure, homodimer. Heterodimer; efficient DNA binding requires dimerization with another bHLH protein. Interacts with ARNT; the heterodimer ARNT:AHR binds to core DNA sequence 5'-TGCGTG-3' within the dioxin response element (DRE) of target gene promoters and activates their transcription. Binds MYBBP1A. Interacts with coactivators including SRC-1, RIP140 and NOCA7, and with the corepressor SMRT. Interacts with NEDD8 and IVNS1ABP. Interacts with BMAL1. Interacts with HSP90AB1. Interacts with TIPARP; leading to mono-ADP-ribosylation of AHR and subsequent inhibition of AHR. In terms of processing, mono-ADP-ribosylated, leading to inhibit transcription activator activity of AHR.

It is found in the cytoplasm. The protein resides in the nucleus. Ligand-activated transcription factor that enables cells to adapt to changing conditions by sensing compounds from the environment, diet, microbiome and cellular metabolism, and which plays important roles in development, immunity and cancer. Upon ligand binding, translocates into the nucleus, where it heterodimerizes with ARNT and induces transcription by binding to xenobiotic response elements (XRE). Regulates a variety of biological processes, including angiogenesis, hematopoiesis, drug and lipid metabolism, cell motility and immune modulation. Xenobiotics can act as ligands: upon xenobiotic-binding, activates the expression of multiple phase I and II xenobiotic chemical metabolizing enzyme genes (such as the CYP1A1 gene). Mediates biochemical and toxic effects of halogenated aromatic hydrocarbons. Next to xenobiotics, natural ligands derived from plants, microbiota, and endogenous metabolism are potent AHR agonists. Tryptophan (Trp) derivatives constitute an important class of endogenous AHR ligands. Acts as a negative regulator of anti-tumor immunity: indoles and kynurenic acid generated by Trp catabolism act as ligand and activate AHR, thereby promoting AHR-driven cancer cell motility and suppressing adaptive immunity. Regulates the circadian clock by inhibiting the basal and circadian expression of the core circadian component PER1. Inhibits PER1 by repressing the CLOCK-BMAL1 heterodimer mediated transcriptional activation of PER1. The heterodimer ARNT:AHR binds to core DNA sequence 5'-TGCGTG-3' within the dioxin response element (DRE) of target gene promoters and activates their transcription. The polypeptide is Aryl hydrocarbon receptor (AHR) (Delphinapterus leucas (Beluga whale)).